The primary structure comprises 137 residues: Large ribosomal subunit protein uL24 (137 aa).

This sequence belongs to the universal ribosomal protein uL24 family. As to quaternary structure, part of the 50S ribosomal subunit.

In terms of biological role, one of two assembly initiator proteins, it binds directly to the 5'-end of the 23S rRNA, where it nucleates assembly of the 50S subunit. Functionally, located at the polypeptide exit tunnel on the outside of the subunit. The protein is Large ribosomal subunit protein uL24 of Sulfurisphaera tokodaii (strain DSM 16993 / JCM 10545 / NBRC 100140 / 7) (Sulfolobus tokodaii).